Here is a 261-residue protein sequence, read N- to C-terminus: Indole-3-glycerol phosphate synthase (261 aa).

This sequence belongs to the TrpC family.

The catalysed reaction is 1-(2-carboxyphenylamino)-1-deoxy-D-ribulose 5-phosphate + H(+) = (1S,2R)-1-C-(indol-3-yl)glycerol 3-phosphate + CO2 + H2O. The protein operates within amino-acid biosynthesis; L-tryptophan biosynthesis; L-tryptophan from chorismate: step 4/5. The protein is Indole-3-glycerol phosphate synthase of Alkaliphilus metalliredigens (strain QYMF).